Reading from the N-terminus, the 193-residue chain is Pre-histone-like nucleoprotein (193 aa).

Ser2 is modified (N-acetylserine; by host). Residues 2-24 (SIFISPSNNTGWGLRAPSKMYGG) constitute a propeptide that is removed on maturation. The residue at position 48 (Lys48) is an N6-acetyllysine; by host. Position 55 is a phosphothreonine; by host (Thr55). Residues 183–193 (RVPVRTRPPRT) carry the Nuclear localization signal motif.

The protein belongs to the adenoviridae histone-like nucleoprotein family. As to quaternary structure, interacts with the core-capsid bridging protein; this interaction bridges the virus core to the capsid. Interacts with host NPM1; this interaction might play a role in placing the pre-histone-like nucleoprotein on the viral DNA or regulating viral gene expression. Interacts with host HMGB1; this interaction inhibits host immune response. Post-translationally, cleaved near the N-terminus by the viral protease during virion maturation to form the mature protein.

The protein localises to the virion. It is found in the host nucleus. It localises to the host nucleolus. Functionally, plays a role in the inhibition of host immune response within the nucleus. Interacts with cellular nucleosomes and immobilizes the host immune danger signal HMGB1 on chromatin. In turn, prevents HMGB1 release out of the cell and thus decreases inflammation. Also plays a role in the wrapping and condensation of the viral DNA. May also promote viral genome import into the nucleus. This chain is Pre-histone-like nucleoprotein, found in Homo sapiens (Human).